The chain runs to 244 residues: 1-(5-phosphoribosyl)-5-[(5-phosphoribosylamino)methylideneamino] imidazole-4-carboxamide isomerase (244 aa).

The active-site Proton acceptor is the aspartate 8. The active-site Proton donor is the aspartate 129.

The protein belongs to the HisA/HisF family.

The protein localises to the cytoplasm. The catalysed reaction is 1-(5-phospho-beta-D-ribosyl)-5-[(5-phospho-beta-D-ribosylamino)methylideneamino]imidazole-4-carboxamide = 5-[(5-phospho-1-deoxy-D-ribulos-1-ylimino)methylamino]-1-(5-phospho-beta-D-ribosyl)imidazole-4-carboxamide. It participates in amino-acid biosynthesis; L-histidine biosynthesis; L-histidine from 5-phospho-alpha-D-ribose 1-diphosphate: step 4/9. The polypeptide is 1-(5-phosphoribosyl)-5-[(5-phosphoribosylamino)methylideneamino] imidazole-4-carboxamide isomerase (Thermodesulfovibrio yellowstonii (strain ATCC 51303 / DSM 11347 / YP87)).